The primary structure comprises 913 residues: Transient receptor potential cation channel protein painless (913 aa).

The Cytoplasmic segment spans residues 1-490 (MDFNNCGFID…SSFLFLKWHR (490 aa)). ANK repeat units follow at residues 154–189 (GEFT…DIDS), 260–289 (EYFG…DINS), and 368–397 (GRLV…YIGS). Residues 491 to 511 (LSVIFYLNFLIYSLFTASIIT) traverse the membrane as a helical segment. Over 512 to 523 (YTLLKFHESDQR) the chain is Extracellular. A helical membrane pass occupies residues 524-544 (ALTAFFGLLSWLGISYLILRE). The Cytoplasmic segment spans residues 545–555 (CIQWIMSPVRY). A helical membrane pass occupies residues 556–576 (FWSITNIMEVALITLSIFTCM). At 577–586 (ESSFDKETQR) the chain is on the extracellular side. A helical transmembrane segment spans residues 587–607 (VLAVFTILLVSMEFCLLVGSL). Topologically, residues 608–628 (PVLSISTHMLMLREVSNSFLK) are cytoplasmic. A helical membrane pass occupies residues 629–649 (SFTLYSIFVLTFSLCFYILFG). Residues 650–708 (KSVEEDQSKSATPCPPLGKKEGKDEEQGFNTFTKPIEAVIKTIVMLTGEFDAGSIQFTS) are Extracellular-facing. A disordered region spans residues 656 to 675 (QSKSATPCPPLGKKEGKDEE). The helical transmembrane segment at 709–729 (IYTYLIFLLFVIFMTIVLFNL) threads the bilayer. Over 730 to 913 (LNGLAVSDTQ…QLIQLVQDRK (184 aa)) the chain is Cytoplasmic.

It belongs to the transient receptor (TC 1.A.4) family. Present in multidendritic neurons, chordotonal neurons, a subset of cells in the central nervous system and a subset of sensory neurons in the antennal-maxillary complex. Not detected in gonads and dorsal vessels (at protein level). Expressed in peripheral neurons that extend multiple branched dendrites beneath the larval epidermis, similar to vertebrate pain receptors.

The protein resides in the membrane. In terms of biological role, receptor-activated non-selective cation channel involved in detection of pain sensation due to high temperature. Involved in heat nociception by being activated by noxious temperature of 38 degrees Celsius. This chain is Transient receptor potential cation channel protein painless (pain), found in Drosophila melanogaster (Fruit fly).